A 106-amino-acid polypeptide reads, in one-letter code: Biogenesis of lysosome-related organelles complex 1 subunit BLS1 (106 aa).

Belongs to the BLOC1S1 family. In terms of assembly, component of the biogenesis of lysosome-related organelles complex-1 (BLOC-1).

The protein localises to the endosome. In terms of biological role, component of the biogenesis of lysosome-related organelles complex-1 (BLOC-1), a complex involved in endosomal cargo sorting. The chain is Biogenesis of lysosome-related organelles complex 1 subunit BLS1 (BLS1) from Candida glabrata (strain ATCC 2001 / BCRC 20586 / JCM 3761 / NBRC 0622 / NRRL Y-65 / CBS 138) (Yeast).